We begin with the raw amino-acid sequence, 783 residues long: E3 UFM1-protein ligase 1 homolog (783 aa).

The tract at residues 404-482 (SNSSANFDAD…AGSSRKSVKP (79 aa)) is disordered. Residues 445–457 (KSTKKHQRGRAAA) show a composition bias toward basic residues.

It belongs to the UFL1 family.

Functionally, E3 UFM1-protein ligase that mediates ufmylation of target proteins. In Drosophila mojavensis (Fruit fly), this protein is E3 UFM1-protein ligase 1 homolog.